Reading from the N-terminus, the 269-residue chain is MNSPLAHAIPDVQNSEDSRQIAINKVGIKSIRHPVKVSDKNGGVQHTVANFNMYVGLPHNFKGTHMSRFIEILNSNEREISVESFEPMLREMVKRLEAETGHVEMTFPYFINKSAPVSGVQSLMDYEVTFTGEIHEGGRYEFTMKVVVPVTSLCPCSKKISAYGAHNQRSHVTVTATLNDHLWIEDVVQLVEGQASCEVYGLLKRPDEKYVTERAYDNPKFVEDMVRDVAGLLNKEVRIDAYAVESENFESIHNHSAYALIERDKRIEA.

It belongs to the GTP cyclohydrolase IV family.

The enzyme catalyses GTP + H2O = 7,8-dihydroneopterin 3'-triphosphate + formate + H(+). The protein operates within cofactor biosynthesis; 7,8-dihydroneopterin triphosphate biosynthesis; 7,8-dihydroneopterin triphosphate from GTP: step 1/1. Functionally, converts GTP to 7,8-dihydroneopterin triphosphate. The chain is GTP cyclohydrolase FolE2 from Azoarcus sp. (strain BH72).